Consider the following 312-residue polypeptide: Glyoxylate/hydroxypyruvate reductase A (312 aa).

Residue R227 is part of the active site. The active-site Proton donor is the H275.

It belongs to the D-isomer specific 2-hydroxyacid dehydrogenase family. GhrA subfamily.

It localises to the cytoplasm. It carries out the reaction glycolate + NADP(+) = glyoxylate + NADPH + H(+). The enzyme catalyses (R)-glycerate + NAD(+) = 3-hydroxypyruvate + NADH + H(+). The catalysed reaction is (R)-glycerate + NADP(+) = 3-hydroxypyruvate + NADPH + H(+). Functionally, catalyzes the NADPH-dependent reduction of glyoxylate and hydroxypyruvate into glycolate and glycerate, respectively. This chain is Glyoxylate/hydroxypyruvate reductase A, found in Salmonella choleraesuis (strain SC-B67).